The primary structure comprises 451 residues: Phosphoglucosamine mutase (451 aa).

The active-site Phosphoserine intermediate is the Ser102. Mg(2+)-binding residues include Ser102, Asp243, Asp245, and Asp247. Ser102 bears the Phosphoserine mark.

It belongs to the phosphohexose mutase family. Mg(2+) serves as cofactor. Post-translationally, activated by phosphorylation.

The enzyme catalyses alpha-D-glucosamine 1-phosphate = D-glucosamine 6-phosphate. In terms of biological role, catalyzes the conversion of glucosamine-6-phosphate to glucosamine-1-phosphate. This is Phosphoglucosamine mutase from Salinispora arenicola (strain CNS-205).